We begin with the raw amino-acid sequence, 90 residues long: Small ribosomal subunit protein uS15c (90 aa).

This sequence belongs to the universal ribosomal protein uS15 family. Part of the 30S ribosomal subunit.

Its subcellular location is the plastid. It is found in the chloroplast. This chain is Small ribosomal subunit protein uS15c (rps15), found in Panax ginseng (Korean ginseng).